Reading from the N-terminus, the 253-residue chain is Ribulose bisphosphate carboxylase large chain (253 aa).

Substrate contacts are provided by N35 and T85. Catalysis depends on K87, which acts as the Proton acceptor. K89 is a binding site for substrate. Residues K113, D115, and E116 each contribute to the Mg(2+) site. K113 carries the N6-carboxylysine modification. The active-site Proton acceptor is H206. Residues R207 and H239 each coordinate substrate.

This sequence belongs to the RuBisCO large chain family. Type I subfamily. As to quaternary structure, heterohexadecamer of 8 large chains and 8 small chains; disulfide-linked. The disulfide link is formed within the large subunit homodimers. Requires Mg(2+) as cofactor. Post-translationally, the disulfide bond which can form in the large chain dimeric partners within the hexadecamer appears to be associated with oxidative stress and protein turnover.

The protein localises to the plastid. It is found in the chloroplast. The catalysed reaction is 2 (2R)-3-phosphoglycerate + 2 H(+) = D-ribulose 1,5-bisphosphate + CO2 + H2O. It carries out the reaction D-ribulose 1,5-bisphosphate + O2 = 2-phosphoglycolate + (2R)-3-phosphoglycerate + 2 H(+). In terms of biological role, ruBisCO catalyzes two reactions: the carboxylation of D-ribulose 1,5-bisphosphate, the primary event in carbon dioxide fixation, as well as the oxidative fragmentation of the pentose substrate in the photorespiration process. Both reactions occur simultaneously and in competition at the same active site. The sequence is that of Ribulose bisphosphate carboxylase large chain (rbcL) from Magnolia latahensis (Apocynophyllum latahense).